We begin with the raw amino-acid sequence, 612 residues long: T-cell immunomodulatory protein (612 aa).

Residues 1–33 (MAAAGRLPSSWALFSPLLAGLALLGVGPVPARA) form the signal peptide. Residues asparagine 36, asparagine 95, asparagine 139, asparagine 146, asparagine 151, asparagine 176, asparagine 188, asparagine 226, and asparagine 243 are each glycosylated (N-linked (GlcNAc...) asparagine). The FG-GAP; atypical repeat unit spans residues 258 to 293 (VVGQSAFADFDGDGHMDHLLPGCEDKNCQKSTIYLV). Residues asparagine 353, asparagine 371, and asparagine 482 are each glycosylated (N-linked (GlcNAc...) asparagine). A helical transmembrane segment spans residues 567-587 (VLLTAIALIGVCVFILAIIGI).

Belongs to the TIP family. As to quaternary structure, interacts with RUVBL1, RUVBL2 and alpha-tubulin. As to expression, ubiquitously expressed.

It localises to the secreted. The protein resides in the membrane. In terms of biological role, modulator of T-cell function. Has a protective effect in graft versus host disease model. In Homo sapiens (Human), this protein is T-cell immunomodulatory protein.